We begin with the raw amino-acid sequence, 216 residues long: Ceramide-1-phosphate transfer protein (216 aa).

Residues aspartate 56, lysine 60, arginine 108, arginine 112, and histidine 152 each contribute to the an N-acylsphingoid base 1-phosphate site.

The protein belongs to the GLTP family.

Its subcellular location is the cytoplasm. The protein localises to the cytosol. The protein resides in the golgi apparatus. It localises to the trans-Golgi network membrane. It is found in the cell membrane. Its subcellular location is the endosome membrane. The protein localises to the nucleus outer membrane. It catalyses the reaction N-(hexadecanoyl)-sphing-4-enine-1-phosphate(in) = N-(hexadecanoyl)-sphing-4-enine-1-phosphate(out). The enzyme catalyses N-(9Z-octadecenoyl)-sphing-4-enine-1-phosphate(in) = N-(9Z-octadecenoyl)-sphing-4-enine-1-phosphate(out). In terms of biological role, mediates the intracellular transfer of ceramide-1-phosphate (C1P) between organelle membranes and the cell membrane. Required for normal structure of the Golgi stacks. Can bind phosphoceramides with a variety of aliphatic chains, but has a preference for lipids with saturated C16:0 or monounsaturated C18:1 aliphatic chains, and is inefficient with phosphoceramides containing lignoceryl (C24:0). Plays a role in the regulation of the cellular levels of ceramide-1-phosphate, and thereby contributes to the regulation of phospholipase PLA2G4A activity and the release of arachidonic acid. Has no activity with galactosylceramide, lactosylceramide, sphingomyelin, phosphatidylcholine, phosphatidic acid and ceramide. C1P transfer is stimulated by phosphatidylserine in C1P source vesicles. Regulates autophagy, inflammasome mediated IL1B and IL18 processing, and pyroptosis, but not apoptosis. The protein is Ceramide-1-phosphate transfer protein (Cptp) of Rattus norvegicus (Rat).